The sequence spans 241 residues: Uridylate kinase (241 aa).

ATP-binding positions include 10–13 (KLSG), Gly53, and Arg57. Residues Asp72 and 133–140 (AGSPYFST) contribute to the UMP site. The ATP site is built by Asn161, Tyr167, and Asp170.

This sequence belongs to the UMP kinase family. In terms of assembly, homohexamer.

The protein resides in the cytoplasm. The enzyme catalyses UMP + ATP = UDP + ADP. The protein operates within pyrimidine metabolism; CTP biosynthesis via de novo pathway; UDP from UMP (UMPK route): step 1/1. Inhibited by UTP. Functionally, catalyzes the reversible phosphorylation of UMP to UDP. The polypeptide is Uridylate kinase (Aster yellows witches'-broom phytoplasma (strain AYWB)).